A 366-amino-acid polypeptide reads, in one-letter code: Latent membrane protein 1 (366 aa).

Residues 1 to 23 lie on the Cytoplasmic side of the membrane; the sequence is MERDLERGPPGPPRPPLGPPLSS. Residues 24–44 form a helical membrane-spanning segment; it reads SIGLALLLLLLALLFWLYIVL. The Extracellular segment spans residues 45-51; sequence SNWTGGA. A helical membrane pass occupies residues 52–72; the sequence is LLVLYSFALMLIIIILIIFIF. The Cytoplasmic portion of the chain corresponds to 73–75; sequence RRD. The chain crosses the membrane as a helical span at residues 76 to 96; that stretch reads LLCPLGGLGLLLLMVTLLLIA. Residues 97–106 are Extracellular-facing; that stretch reads LWNLHGQALY. The chain crosses the membrane as a helical span at residues 107 to 127; sequence LGIVLFIFGCLLVLGLWIYFL. Residues 128–139 lie on the Cytoplasmic side of the membrane; sequence EILWRLGATIWQ. A helical transmembrane segment spans residues 140–160; the sequence is LLAFILAFFLAIILLIIALYL. The Extracellular segment spans residues 161–163; sequence QQN. The chain crosses the membrane as a helical span at residues 164–184; the sequence is WWTLLVDLLWLLLFMAILIWM. The Cytoplasmic portion of the chain corresponds to 185-366; it reads YFHGPRHTDE…HGPVQLSYYD (182 aa). Positions 194–232 are CTAR1; that stretch reads EHHHDDSLPHPQQATDDSSHESDSNSNEGRHHLLVSGAG. Residues 194–366 form a disordered region; the sequence is EHHHDDSLPH…HGPVQLSYYD (173 aa). The short motif at 204 to 208 is the Interaction with host TRAF proteins element; that stretch reads PQQAT. A compositionally biased stretch (basic and acidic residues) spans 210–224; it reads DSSHESDSNSNEGRH. Composition is skewed to low complexity over residues 251 to 267 and 337 to 346; these read NGPQDPDNTDDNGPQDP and PHLPTLLLGT. Positions 332 to 366 are CTAR2; it reads GGGGDPHLPTLLLGTSGSGGDDDDPHGPVQLSYYD.

It belongs to the herpesviridae LMP-1 family. As to quaternary structure, interacts (via PXQXT motif) with host tumor necrosis factor receptor-associated factor (TRAF) proteins TRAF1, TRAF2, TRAF3 and TRAF5. Interacts with human protein ZMYND11; leading to negatively regulate NF-kappa-B activation. Interacts with host UBE2I; this interaction induces the sumoylation of various cellular proteins. Interacts with host IRF7. Ubiquitinated on the N-terminus.

Its subcellular location is the host cell membrane. In terms of biological role, acts as a CD40 functional homolog to prevent apoptosis of infected B-lymphocytes and drive their proliferation. Functions as a constitutively active tumor necrosis factor receptor that induces the activation of several signaling pathways, including those of the NF-kappa-B family. LMP1 signaling leads to up-regulation of antiapoptotic proteins and provide growth signals in latently infected cells. Interacts with host UBE2I and subsequently affects the sumoylation state of several cellular proteins. For example, induces the sumoylation of host IRF7 thereby limiting its transcriptional activity and modulating the activation of innate immune responses. Also inhibits host IFN-alpha-stimulated STAT2 nuclear translocation and interferon-stimulated response element transcriptional activity by interacting with and inhibiting host TYK2. Induces SUMO expression during viral latency thereby dysregulating the host sumoylation processes. In Homo sapiens (Human), this protein is Latent membrane protein 1 (LMP1).